The sequence spans 1068 residues: Putative protein TIC 214 N-terminal part (1068 aa).

6 helical membrane-spanning segments follow: residues 11–31, 68–88, 92–112, 131–151, 166–186, and 213–233; these read VLWV…LFGI, ITGQ…VLLI, LLTL…KDLI, IFFD…SPVL, FIFL…FVSL, and FSII…VPFI.

Belongs to the TIC214 family. In terms of assembly, part of the Tic complex.

The protein resides in the plastid. The protein localises to the chloroplast inner membrane. Involved in protein precursor import into chloroplasts. May be part of an intermediate translocation complex acting as a protein-conducting channel at the inner envelope. This is Putative protein TIC 214 N-terminal part from Marchantia polymorpha (Common liverwort).